Consider the following 462-residue polypeptide: Serine--tRNA ligase, cytoplasmic (462 aa).

Residue K241 forms a Glycyl lysine isopeptide (Lys-Gly) (interchain with G-Cter in URM1) linkage. 246–248 serves as a coordination point for L-serine; it reads TSE. ATP is bound by residues 279 to 281 and V295; that span reads RRE. Residue E302 coordinates L-serine. Glycyl lysine isopeptide (Lys-Gly) (interchain with G-Cter in URM1) cross-links involve residues K350 and K351. 366 to 369 is an ATP binding site; that stretch reads ELVS. Residues C373 and C400 each carry the cysteine persulfide modification. Residue T404 participates in L-serine binding.

The protein belongs to the class-II aminoacyl-tRNA synthetase family. Type-1 seryl-tRNA synthetase subfamily. As to quaternary structure, homodimer; the tRNA molecule probably binds across the dimer. Interacts with ABP140; interaction is required for the tRNA N(3)-methylcytidine methyltransferase activity of ABP140. Post-translationally, conjugated to URM1, a ubiquitin-like protein, in response to oxidative stresses. The attachment of URM1 to lysine residues exclusively depends on the presence of a peroxidatic cysteine in the target protein, with low specificity for the particular residue, motif, or structural context at which urmylation can occur. The URM1-conjugation reaction is mechanistically and directly coupled to the process of cysteine persulfidation, transfering the sulfur atom of the URM1 thiocarboxyl group to redox-active cysteine residues in the target protein if it is exposed to oxidative conditions. In terms of processing, persulfidated on specific redox-active cysteine residues. Persulfidation (also called protein S-sulfhydration) may provide a molecular mechanism that enables cells to protect vulnerable cysteine residues from reactive oxygen species (ROS) under stress conditions.

It localises to the cytoplasm. The protein resides in the cytosol. The enzyme catalyses tRNA(Ser) + L-serine + ATP = L-seryl-tRNA(Ser) + AMP + diphosphate + H(+). In terms of biological role, catalyzes the attachment of serine to tRNA(Ser) in a two-step reaction: serine is first activated by ATP to form Ser-AMP and then transferred to the acceptor end of tRNA(Ser). The chain is Serine--tRNA ligase, cytoplasmic (SES1) from Saccharomyces cerevisiae (strain ATCC 204508 / S288c) (Baker's yeast).